The sequence spans 213 residues: G2/mitotic-specific cyclin-1 (213 aa).

The disordered stretch occupies residues 1 to 23; it reads MKFSEEKNVSNNPTNFEGGLDSR.

Belongs to the cyclin family. Cyclin AB subfamily. In terms of assembly, interacts with the CDC2 protein kinase to form a serine/threonine kinase holoenzyme complex also known as maturation promoting factor (MPF). The cyclin subunit imparts substrate specificity to the complex. Only expressed in organs with dividing cells.

In terms of biological role, essential for the control of the cell cycle at the G2/M (mitosis) transition. This chain is G2/mitotic-specific cyclin-1, found in Medicago sativa (Alfalfa).